The sequence spans 200 residues: dITP/XTP pyrophosphatase (200 aa).

Substrate is bound at residue 7–12 (TSNKHK). 2 residues coordinate Mg(2+): glutamate 38 and aspartate 73. Catalysis depends on aspartate 73, which acts as the Proton acceptor. Substrate is bound by residues serine 74, 154-157 (FGYD), lysine 177, and 182-183 (HR).

The protein belongs to the HAM1 NTPase family. Homodimer. Mg(2+) is required as a cofactor.

It catalyses the reaction XTP + H2O = XMP + diphosphate + H(+). It carries out the reaction dITP + H2O = dIMP + diphosphate + H(+). The enzyme catalyses ITP + H2O = IMP + diphosphate + H(+). Its function is as follows. Pyrophosphatase that catalyzes the hydrolysis of nucleoside triphosphates to their monophosphate derivatives, with a high preference for the non-canonical purine nucleotides XTP (xanthosine triphosphate), dITP (deoxyinosine triphosphate) and ITP. Seems to function as a house-cleaning enzyme that removes non-canonical purine nucleotides from the nucleotide pool, thus preventing their incorporation into DNA/RNA and avoiding chromosomal lesions. The chain is dITP/XTP pyrophosphatase from Campylobacter jejuni subsp. doylei (strain ATCC BAA-1458 / RM4099 / 269.97).